The sequence spans 192 residues: MKLLEDRILNDGDVLGENILKLTFLTHQVDFELMREIGKVFAEKFKDTGITKVVAIEASGIAPALYATEALDVPMIFAKKAKNITMNEGILTAEVYSFTKQVTSTVSIASKFLTPEDKVLIVDDFLANGQAAKGLIQIIEEAGAHVEAVGIVIEKSFQDGRALLEEASYPVVSLARLERFENGQVVFKEADI.

Xanthine is bound by residues L20 and T26. 127-131 (ANGQA) provides a ligand contact to 5-phospho-alpha-D-ribose 1-diphosphate. Position 155 (K155) interacts with xanthine.

Belongs to the purine/pyrimidine phosphoribosyltransferase family. Xpt subfamily. In terms of assembly, homodimer.

It localises to the cytoplasm. It carries out the reaction XMP + diphosphate = xanthine + 5-phospho-alpha-D-ribose 1-diphosphate. The protein operates within purine metabolism; XMP biosynthesis via salvage pathway; XMP from xanthine: step 1/1. Converts the preformed base xanthine, a product of nucleic acid breakdown, to xanthosine 5'-monophosphate (XMP), so it can be reused for RNA or DNA synthesis. The chain is Xanthine phosphoribosyltransferase from Streptococcus thermophilus.